Consider the following 326-residue polypeptide: Transmembrane protein 255B (326 aa).

4 helical membrane-spanning segments follow: residues 26–46 (LWFV…GLAA), 55–75 (VGGY…IIGI), 85–105 (LVAA…CAIV), and 200–220 (AVLN…LGAF). Residues 284-326 (LASSEDLQPPSPSSSGSGLPGQAPPCYAPTYFPPGEKPPPYAP) form a disordered region. Positions 305 to 326 (QAPPCYAPTYFPPGEKPPPYAP) are enriched in pro residues.

This sequence belongs to the TMEM255 family.

It localises to the membrane. This Homo sapiens (Human) protein is Transmembrane protein 255B (TMEM255B).